The chain runs to 277 residues: Glycerol-3-phosphate acyltransferase (277 aa).

Helical transmembrane passes span 3–23 (FFIF…AIIV), 55–75 (IMVM…AKLL), 79–99 (PVTV…PVFF), 111–131 (IGAL…TWLL), and 155–175 (LILV…ILVL). Residues 231–277 (KTEQAEAVKKPKAKKATTKAKKTTSKEETAKKPKSTKPKTKTVKEKE) form a disordered region. 2 stretches are compositionally biased toward basic residues: residues 240 to 253 (KPKA…AKKT) and 262 to 271 (KPKSTKPKTK).

It belongs to the PlsY family. In terms of assembly, probably interacts with PlsX.

The protein resides in the cell inner membrane. The enzyme catalyses an acyl phosphate + sn-glycerol 3-phosphate = a 1-acyl-sn-glycero-3-phosphate + phosphate. Its pathway is lipid metabolism; phospholipid metabolism. In terms of biological role, catalyzes the transfer of an acyl group from acyl-phosphate (acyl-PO(4)) to glycerol-3-phosphate (G3P) to form lysophosphatidic acid (LPA). This enzyme utilizes acyl-phosphate as fatty acyl donor, but not acyl-CoA or acyl-ACP. In Legionella pneumophila (strain Lens), this protein is Glycerol-3-phosphate acyltransferase.